The chain runs to 800 residues: Heterogeneous nuclear ribonucleoprotein U (800 aa).

N-acetylserine is present on Ser2. Ser4 carries the phosphoserine modification. Residues 8–42 (VKKLKVSELKEELKKRRLSDKGLKADLMDRLQAAL) form the SAP domain. Lys17 and Lys21 each carry N6-acetyllysine. The tract at residues 41-257 (ALDNEAGGRP…PQPPVEEEDE (217 aa)) is disordered. Residue Ser58 is modified to Phosphoserine. 2 stretches are compositionally biased toward low complexity: residues 71 to 80 (AGLEQEAAAG) and 103 to 113 (ENGAAGAADAG). 2 stretches are compositionally biased toward acidic residues: residues 114 to 128 (AMEEEEAASEDENGD) and 134 to 147 (EGEDELGDEEEGAG). The segment covering 153–173 (GEQQSQPPAAAAQQQPSQQRG) has biased composition (low complexity). Lys181 bears the N6-acetyllysine mark. Ser182 is subject to ADP-ribosylserine. Residues 194–205 (APPGARQGQQQA) show a composition bias toward low complexity. The segment covering 209–242 (GKTEQKGGDKKRGVKRPREDHGRGYFEYIEENKY) has biased composition (basic and acidic residues). Citrulline is present on Arg231. Residue Lys241 is modified to N6-acetyllysine; alternate. A Glycyl lysine isopeptide (Lys-Gly) (interchain with G-Cter in SUMO1); alternate cross-link involves residue Lys241. Residue Lys241 forms a Glycyl lysine isopeptide (Lys-Gly) (interchain with G-Cter in SUMO2); alternate linkage. Residue Tyr242 is modified to Phosphotyrosine. A phosphoserine mark is found at Ser243 and Ser247. The B30.2/SPRY domain maps to 244 to 440 (RAKSPQPPVE…VEFNFGQKEK (197 aa)). Thr262 carries the post-translational modification Phosphothreonine. N6-acetyllysine is present on Lys328. The tract at residues 464-648 (PKGPEEKKDC…QKLLEQYKEE (185 aa)) is ATPase domain. A Glycyl lysine isopeptide (Lys-Gly) (interchain with G-Cter in SUMO2) cross-link involves residue Lys471. 480-487 (GLPGAGKT) is a binding site for ATP. 2 positions are modified to N6-acetyllysine; alternate: Lys492 and Lys500. Residues Lys492 and Lys500 each participate in a glycyl lysine isopeptide (Lys-Gly) (interchain with G-Cter in SUMO2); alternate cross-link. A Phosphothreonine modification is found at Thr508. Residue Lys512 forms a Glycyl lysine isopeptide (Lys-Gly) (interchain with G-Cter in SUMO2) linkage. Lys527 carries the post-translational modification N6-acetyllysine. The residue at position 541 (Lys541) is an N6-acetyllysine; alternate. Residue Lys541 forms a Glycyl lysine isopeptide (Lys-Gly) (interchain with G-Cter in SUMO2); alternate linkage. Lys550 is covalently cross-linked (Glycyl lysine isopeptide (Lys-Gly) (interchain with G-Cter in SUMO2)). Thr558 is subject to Phosphothreonine. Glycyl lysine isopeptide (Lys-Gly) (interchain with G-Cter in SUMO2) cross-links involve residues Lys585 and Lys602. The interval 587–602 (EDYKQRTQKKAEVEGK) is actin-binding. Lys611 carries the N6-acetyllysine; alternate modification. Lys611 participates in a covalent cross-link: Glycyl lysine isopeptide (Lys-Gly) (interchain with G-Cter in SUMO2); alternate. Residues 626–653 (DEITYVELQKEEAQKLLEQYKEESKKAL) are a coiled coil. Glycyl lysine isopeptide (Lys-Gly) (interchain with G-Cter in SUMO2) cross-links involve residues Lys640 and Lys646. Over residues 647–659 (EESKKALPPEKKQ) the composition is skewed to basic and acidic residues. Residues 647-729 (EESKKALPPE…GSGGIGYPYP (83 aa)) are disordered. Residue Arg678 is modified to Omega-N-methylarginine. Over residues 686–704 (GGFNMRGGNFRGGAPGNRG) the composition is skewed to gly residues. The tract at residues 690 to 715 (MRGGNFRGGAPGNRGGYNRRGNMPQR) is RNA-binding RGG-box. Asymmetric dimethylarginine occurs at positions 691, 696, and 703. 2 positions are modified to asymmetric dimethylarginine; alternate: Arg709 and Arg715. Arg709 and Arg715 each carry omega-N-methylarginine; alternate. Gly residues predominate over residues 715–725 (RGGGGGSGGIG). Residues Arg730 and Arg737 each carry the asymmetric dimethylarginine modification. A disordered region spans residues 745-774 (NYNRGGMPNRGNYNQNFRGRGNNRGYKNQS). Lys789 bears the N6-acetyllysine; alternate mark. Lys789 is covalently cross-linked (Glycyl lysine isopeptide (Lys-Gly) (interchain with G-Cter in SUMO2); alternate).

As to quaternary structure, oligomer (via ATPase domain and RNA-binding RGG-box region); oligomerization occurs upon ATP-binding in a chromatin-associated RNAs (caRNAs)- and transcription-dependent manner and is required for chromatin decompaction. ATP hydrolysis is required to cycle from an oligomeric to monomeric state to compact chromatin. Component of the coding region determinant (CRD)-mediated complex, composed of DHX9, HNRNPU, IGF2BP1, SYNCRIP and YBX1. Identified in the spliceosome C complex. Identified in a IGF2BP1-dependent mRNP granule complex containing untranslated mRNAs. Associates with heterogeneous nuclear ribonucleoprotein (hnRNP) particles. Associates (via middle region) with the C-terminal domain (CTD) RNA polymerase II (Pol II) holoenzyme; this association occurs in a RNA-independent manner. Associates (via middle region) with the core-TFIIH basal transcription factor complex; this association inhibits the CTD phosphorylation of RNA polymerase II holoenzyme by down-regulating TFIIH kinase activity. Associates with the telomerase holoenzyme complex. Associates with spindle microtubules (MTs) in a TPX2-dependent manner. Interacts (via C-terminus) with actin; this interaction is direct and mediates association with the phosphorylated CTD of RNA polymerase II and is disrupted in presence of the long non-coding H19 RNA. Interacts with AURKA. Interacts (via C-terminus) with CBX5; this interaction is, at least in part, RNA-dependent. Interacts with CR2. Interacts with CRY1. Interacts (via C-terminus) with EP300; this interaction enhances DNA-binding to nuclear scaffold/matrix attachment region (S/MAR) elements. Interacts with ERBB4. Interacts with GEMIN5. Interacts with IGF2BP1. Interacts with IGF2BP2 and IGF2BP3. Interacts with NCL; this interaction occurs during mitosis. Interacts (via C-terminus) with NR3C1 (via C-terminus). Interacts with PLK1; this interaction induces phosphorylation of HNRNPU at Ser-58 in mitosis. Interacts with POU3F4. Interacts with SMARCA4; this interaction occurs in embryonic stem cells and stimulates global Pol II-mediated transcription. Interacts (via C-terminus) with TOP2A; this interaction protects the topoisomerase TOP2A from degradation and positively regulates the relaxation of supercoiled DNA by TOP2A in a RNA-dependent manner. Interacts with TPX2; this interaction recruits HNRNPU to spindle microtubules (MTs). Interacts with UBQLN2. Interacts (via RNA-binding RGG-box region) with ZBTB7B; the interaction facilitates the recruitment of long non-coding RNA Blnc1 by ZBTB7B. Interacts with ERCC6. Cleaved at Asp-94 by CASP3 during T-cell apoptosis, resulting in a loss of DNA- and chromatin-binding activities. Post-translationally, extensively phosphorylated. Phosphorylated on Ser-58 by PLK1 and dephosphorylated by protein phosphatase 2A (PP2A) in mitosis. In terms of processing, arg-709 and Arg-715 are dimethylated, probably to asymmetric dimethylarginine. Citrullinated by PADI4.

The protein resides in the nucleus. It localises to the nucleus matrix. It is found in the chromosome. The protein localises to the nucleus speckle. Its subcellular location is the cytoplasm. The protein resides in the cytoskeleton. It localises to the microtubule organizing center. It is found in the centrosome. The protein localises to the centromere. Its subcellular location is the kinetochore. The protein resides in the spindle. It localises to the spindle pole. It is found in the midbody. The protein localises to the cell surface. Its subcellular location is the cytoplasmic granule. In terms of biological role, DNA- and RNA-binding protein involved in several cellular processes such as nuclear chromatin organization, telomere-length regulation, transcription, mRNA alternative splicing and stability, Xist-mediated transcriptional silencing and mitotic cell progression. Plays a role in the regulation of interphase large-scale gene-rich chromatin organization through chromatin-associated RNAs (caRNAs) in a transcription-dependent manner, and thereby maintains genomic stability. Required for the localization of the long non-coding Xist RNA on the inactive chromosome X (Xi) and the subsequent initiation and maintenance of X-linked transcriptional gene silencing during X-inactivation. Plays a role as a RNA polymerase II (Pol II) holoenzyme transcription regulator. Promotes transcription initiation by direct association with the core-TFIIH basal transcription factor complex for the assembly of a functional pre-initiation complex with Pol II in a actin-dependent manner. Blocks Pol II transcription elongation activity by inhibiting the C-terminal domain (CTD) phosphorylation of Pol II and dissociates from Pol II pre-initiation complex prior to productive transcription elongation. Positively regulates CBX5-induced transcriptional gene silencing and retention of CBX5 in the nucleus. Negatively regulates glucocorticoid-mediated transcriptional activation. Key regulator of transcription initiation and elongation in embryonic stem cells upon leukemia inhibitory factor (LIF) signaling. Involved in the long non-coding RNA H19-mediated Pol II transcriptional repression. Participates in the circadian regulation of the core clock component BMAL1 transcription. Plays a role in the regulation of telomere length. Plays a role as a global pre-mRNA alternative splicing modulator by regulating U2 small nuclear ribonucleoprotein (snRNP) biogenesis. Plays a role in mRNA stability. Component of the CRD-mediated complex that promotes MYC mRNA stabilization. Enhances the expression of specific genes, such as tumor necrosis factor TNFA, by regulating mRNA stability, possibly through binding to the 3'-untranslated region (UTR). Plays a role in mitotic cell cycle regulation. Involved in the formation of stable mitotic spindle microtubules (MTs) attachment to kinetochore, spindle organization and chromosome congression. Phosphorylation at Ser-58 by PLK1 is required for chromosome alignement and segregation and progression through mitosis. Also contributes to the targeting of AURKA to mitotic spindle MTs. Binds to double- and single-stranded DNA and RNA, poly(A), poly(C) and poly(G) oligoribonucleotides. Binds to chromatin-associated RNAs (caRNAs). Associates with chromatin to scaffold/matrix attachment region (S/MAR) elements in a chromatin-associated RNAs (caRNAs)-dependent manner. Binds (via RNA-binding RGG-box region) to the long non-coding Xist RNA; this binding is direct and bridges the Xist RNA and the inactive chromosome X (Xi). Binds the long non-coding H19 RNA. Binds to SMN1/2 pre-mRNAs at G/U-rich regions. Binds to small nuclear RNAs (snRNAs). Binds to the 3'-UTR of TNFA mRNA. Also negatively regulates embryonic stem cell differentiation upon LIF signaling. Required for embryonic development. Binds to brown fat long non-coding RNA 1 (Blnc1); facilitates the recruitment of Blnc1 by ZBTB7B required to drive brown and beige fat development and thermogenesis. This is Heterogeneous nuclear ribonucleoprotein U from Mus musculus (Mouse).